The primary structure comprises 88 residues: Phosphocarrier protein HPr (88 aa).

An HPr domain is found at 1–88 (MEQNSYVIID…DVLSKEGLTK (88 aa)). Histidine 15 (pros-phosphohistidine intermediate) is an active-site residue. Serine 46 bears the Phosphoserine; by HPrK/P mark.

The protein resides in the cytoplasm. Phosphorylation on Ser-46 inhibits the phosphoryl transfer from enzyme I to HPr. In terms of biological role, general (non sugar-specific) component of the phosphoenolpyruvate-dependent sugar phosphotransferase system (sugar PTS). This major carbohydrate active-transport system catalyzes the phosphorylation of incoming sugar substrates concomitantly with their translocation across the cell membrane. The phosphoryl group from phosphoenolpyruvate (PEP) is transferred to the phosphoryl carrier protein HPr by enzyme I. Phospho-HPr then transfers it to the PTS EIIA domain. P-Ser-HPr interacts with the catabolite control protein A (CcpA), forming a complex that binds to DNA at the catabolite response elements cre, operator sites preceding a large number of catabolite-regulated genes. Thus, P-Ser-HPr is a corepressor in carbon catabolite repression (CCR), a mechanism that allows bacteria to coordinate and optimize the utilization of available carbon sources. P-Ser-HPr also plays a role in inducer exclusion, in which it probably interacts with several non-PTS permeases and inhibits their transport activity. In Staphylococcus aureus (strain MSSA476), this protein is Phosphocarrier protein HPr (ptsH).